Reading from the N-terminus, the 209-residue chain is Ribosomal RNA small subunit methyltransferase G (209 aa).

Residues glycine 77, methionine 82, 128 to 129 (VE), and arginine 143 contribute to the S-adenosyl-L-methionine site.

This sequence belongs to the methyltransferase superfamily. RNA methyltransferase RsmG family.

It localises to the cytoplasm. The enzyme catalyses guanosine(527) in 16S rRNA + S-adenosyl-L-methionine = N(7)-methylguanosine(527) in 16S rRNA + S-adenosyl-L-homocysteine. Specifically methylates the N7 position of guanine in position 527 of 16S rRNA. This Chromobacterium violaceum (strain ATCC 12472 / DSM 30191 / JCM 1249 / CCUG 213 / NBRC 12614 / NCIMB 9131 / NCTC 9757 / MK) protein is Ribosomal RNA small subunit methyltransferase G.